The following is a 70-amino-acid chain: Ranatuerin-2SN1 (70 aa).

The signal sequence occupies residues 1–22 (MFTLKKSLLLIFFLGTISLSLC). Positions 23-40 (EKERDADDDEVEVIKQEE) are cleaved as a propeptide — removed in mature form. A disulfide bridge connects residues cysteine 65 and cysteine 70.

The protein belongs to the frog skin active peptide (FSAP) family. Ranatuerin subfamily. Expressed by the skin glands.

The protein resides in the secreted. Antimicrobial peptide. Weakly active against P.faecalis X29. Not active against fungi. Shows very weak hemolytic activity against human erythrocytes. This chain is Ranatuerin-2SN1, found in Sylvirana spinulosa (Fine-spined frog).